The following is a 235-amino-acid chain: Putative 4'-phosphopantetheinyl transferase HI_0152 (235 aa).

Asp-112, Glu-114, and Glu-155 together coordinate Mg(2+).

Belongs to the P-Pant transferase superfamily. Gsp/Sfp/HetI/AcpT family. The cofactor is Mg(2+).

In terms of biological role, may transfer the 4'-phosphopantetheine moiety from coenzyme A (CoA) to a serine residue of a carrier protein domain. This is Putative 4'-phosphopantetheinyl transferase HI_0152 from Haemophilus influenzae (strain ATCC 51907 / DSM 11121 / KW20 / Rd).